We begin with the raw amino-acid sequence, 321 residues long: Beta-ketoacyl-[acyl-carrier-protein] synthase III (321 aa).

Residues C116 and H248 contribute to the active site. The tract at residues 249–253 (QANLR) is ACP-binding. N278 is a catalytic residue.

It belongs to the thiolase-like superfamily. FabH family. As to quaternary structure, homodimer.

It is found in the cytoplasm. It carries out the reaction malonyl-[ACP] + acetyl-CoA + H(+) = 3-oxobutanoyl-[ACP] + CO2 + CoA. It functions in the pathway lipid metabolism; fatty acid biosynthesis. Functionally, catalyzes the condensation reaction of fatty acid synthesis by the addition to an acyl acceptor of two carbons from malonyl-ACP. Catalyzes the first condensation reaction which initiates fatty acid synthesis and may therefore play a role in governing the total rate of fatty acid production. Possesses both acetoacetyl-ACP synthase and acetyl transacylase activities. Its substrate specificity determines the biosynthesis of branched-chain and/or straight-chain of fatty acids. The protein is Beta-ketoacyl-[acyl-carrier-protein] synthase III of Yersinia enterocolitica serotype O:8 / biotype 1B (strain NCTC 13174 / 8081).